Reading from the N-terminus, the 728-residue chain is Beta-galactosidase 12 (728 aa).

Positions 1-27 (MGLNFREKAWILLGILCCSSLICSVKA) are cleaved as a signal peptide. The active-site Proton donor is Glu-185. Glu-254 (nucleophile) is an active-site residue. N-linked (GlcNAc...) asparagine glycans are attached at residues Asn-255, Asn-380, and Asn-450.

This sequence belongs to the glycosyl hydrolase 35 family. In terms of tissue distribution, ubiquitous, with higher expression levels in roots and siliques.

The protein resides in the secreted. It is found in the extracellular space. Its subcellular location is the apoplast. The enzyme catalyses Hydrolysis of terminal non-reducing beta-D-galactose residues in beta-D-galactosides.. This Arabidopsis thaliana (Mouse-ear cress) protein is Beta-galactosidase 12 (BGAL12).